Reading from the N-terminus, the 265-residue chain is Small ribosomal subunit protein eS4 (265 aa).

The S4 RNA-binding domain maps to 42–104 (LPLILIIRNR…TNENYRLLYD (63 aa)).

Belongs to the eukaryotic ribosomal protein eS4 family.

Its subcellular location is the cytoplasm. This Zea mays (Maize) protein is Small ribosomal subunit protein eS4 (RPS4).